The chain runs to 316 residues: 4-hydroxy-3-methylbut-2-enyl diphosphate reductase (316 aa).

Cysteine 12 provides a ligand contact to [4Fe-4S] cluster. Residues histidine 41 and histidine 74 each coordinate (2E)-4-hydroxy-3-methylbut-2-enyl diphosphate. 2 residues coordinate dimethylallyl diphosphate: histidine 41 and histidine 74. Isopentenyl diphosphate contacts are provided by histidine 41 and histidine 74. Residue cysteine 96 coordinates [4Fe-4S] cluster. A (2E)-4-hydroxy-3-methylbut-2-enyl diphosphate-binding site is contributed by histidine 124. Position 124 (histidine 124) interacts with dimethylallyl diphosphate. Histidine 124 contacts isopentenyl diphosphate. Residue glutamate 126 is the Proton donor of the active site. Threonine 165 is a binding site for (2E)-4-hydroxy-3-methylbut-2-enyl diphosphate. Cysteine 195 contributes to the [4Fe-4S] cluster binding site. Residues serine 223, serine 224, asparagine 225, and serine 267 each coordinate (2E)-4-hydroxy-3-methylbut-2-enyl diphosphate. Dimethylallyl diphosphate contacts are provided by serine 223, serine 224, asparagine 225, and serine 267. Positions 223, 224, 225, and 267 each coordinate isopentenyl diphosphate.

Belongs to the IspH family. Requires [4Fe-4S] cluster as cofactor.

It carries out the reaction isopentenyl diphosphate + 2 oxidized [2Fe-2S]-[ferredoxin] + H2O = (2E)-4-hydroxy-3-methylbut-2-enyl diphosphate + 2 reduced [2Fe-2S]-[ferredoxin] + 2 H(+). It catalyses the reaction dimethylallyl diphosphate + 2 oxidized [2Fe-2S]-[ferredoxin] + H2O = (2E)-4-hydroxy-3-methylbut-2-enyl diphosphate + 2 reduced [2Fe-2S]-[ferredoxin] + 2 H(+). Its pathway is isoprenoid biosynthesis; dimethylallyl diphosphate biosynthesis; dimethylallyl diphosphate from (2E)-4-hydroxy-3-methylbutenyl diphosphate: step 1/1. The protein operates within isoprenoid biosynthesis; isopentenyl diphosphate biosynthesis via DXP pathway; isopentenyl diphosphate from 1-deoxy-D-xylulose 5-phosphate: step 6/6. In terms of biological role, catalyzes the conversion of 1-hydroxy-2-methyl-2-(E)-butenyl 4-diphosphate (HMBPP) into a mixture of isopentenyl diphosphate (IPP) and dimethylallyl diphosphate (DMAPP). Acts in the terminal step of the DOXP/MEP pathway for isoprenoid precursor biosynthesis. The polypeptide is 4-hydroxy-3-methylbut-2-enyl diphosphate reductase (Acidithiobacillus ferrooxidans (strain ATCC 53993 / BNL-5-31) (Leptospirillum ferrooxidans (ATCC 53993))).